The chain runs to 325 residues: Glycerol-3-phosphate dehydrogenase [NAD(P)+] (325 aa).

Trp-11, Arg-30, and Lys-103 together coordinate NADPH. The sn-glycerol 3-phosphate site is built by Lys-103, Gly-131, and Ser-133. Residue Ala-135 coordinates NADPH. The sn-glycerol 3-phosphate site is built by Lys-186, Asp-242, Ser-252, Arg-253, and Asn-254. Lys-186 acts as the Proton acceptor in catalysis. An NADPH-binding site is contributed by Arg-253. Residues Val-279 and Glu-281 each coordinate NADPH.

It belongs to the NAD-dependent glycerol-3-phosphate dehydrogenase family.

The protein localises to the cytoplasm. The enzyme catalyses sn-glycerol 3-phosphate + NAD(+) = dihydroxyacetone phosphate + NADH + H(+). It carries out the reaction sn-glycerol 3-phosphate + NADP(+) = dihydroxyacetone phosphate + NADPH + H(+). The protein operates within membrane lipid metabolism; glycerophospholipid metabolism. In terms of biological role, catalyzes the reduction of the glycolytic intermediate dihydroxyacetone phosphate (DHAP) to sn-glycerol 3-phosphate (G3P), the key precursor for phospholipid synthesis. The polypeptide is Glycerol-3-phosphate dehydrogenase [NAD(P)+] (Wolbachia pipientis subsp. Culex pipiens (strain wPip)).